Consider the following 70-residue polypeptide: Large ribosomal subunit protein uL29 (70 aa).

Belongs to the universal ribosomal protein uL29 family.

This is Large ribosomal subunit protein uL29 from Symbiobacterium thermophilum (strain DSM 24528 / JCM 14929 / IAM 14863 / T).